Here is a 555-residue protein sequence, read N- to C-terminus: Spermine oxidase (555 aa).

FAD contacts are provided by residues Ala-35, Glu-55, Arg-63, 79–80 (TW), and Val-261. A disordered region spans residues 271–307 (AHPRGPEIEPRGEGDHNHDTGEGGQSGENPQQGRWDE). The segment covering 274–291 (RGPEIEPRGEGDHNHDTG) has biased composition (basic and acidic residues). Residues Glu-519 and 528 to 529 (TT) contribute to the FAD site.

Belongs to the flavin monoamine oxidase family. FAD serves as cofactor. In terms of tissue distribution, widely expressed. Isoform 1 and isoform 2 are expressed at higher level in brain and skeletal muscle. Isoform 7 is found in brain and spleen, isoform 10 is widely expressed but found at lower level in heart, kidney, liver and lung.

Its subcellular location is the cytoplasm. It is found in the nucleus. It catalyses the reaction spermine + O2 + H2O = 3-aminopropanal + spermidine + H2O2. The protein operates within amine and polyamine degradation; spermine degradation. Its function is as follows. Flavoenzyme which catalyzes the oxidation of spermine to spermidine. Can also use N(1)-acetylspermine and spermidine as substrates, with different affinity depending on the isoform (isozyme) and on the experimental conditions. Plays an important role in the regulation of polyamine intracellular concentration and has the potential to act as a determinant of cellular sensitivity to the antitumor polyamine analogs. May contribute to beta-alanine production via aldehyde dehydrogenase conversion of 3-amino-propanal. In Mus musculus (Mouse), this protein is Spermine oxidase (Smox).